Here is a 558-residue protein sequence, read N- to C-terminus: MPAKLNSPSRYHGIYNAPHRAFLRSVGLTDEEIGKPLVAIATAWSEAGPCNFHALALARVAKEGTKEAGLSPLAFPTMVVNDNIGMGSEGMRYSLVSRDLIADMVEAQFNAHAFDGLVGIGGCDKTTPGILMAMARLNVPSIYIYGGSAEPGYFMGKRLTIEDVHEAIGAYLAKRITENELYEIEKRAHPTLGTCSGLFTANTMGSMSEALGMALPGSASPTATSSRRVMYVKETGKALGSLIENGIKSREILTFEAFENAITTLMAMGGSTNAVLHLLAIAYEAGVKLTLDDFNRISKRTPYIASMKPGGDYVMADLDEVGGVPVVLKKLLDAGLLHGDVLTVTGKTMKQNLEQYKYPNVPHSHIVRDVKNPIKPRGGIVILKGSLAPEGAVIKVAATNVVKFEGKAKVYNSEDDAFKGVQSGEVSEGEVVIIRYEGPKGAPGMPEMLRVTAAIMGAGLNNVALVTDGRFSGATRGPMVGHVAPEAMVGGPIAIVEDGDTIVIDVESERLDLKLSEEEIRNRLKRWSPPSPRYKSGLLAKYASLVSQASMGAVTRPA.

Residue C50 coordinates [2Fe-2S] cluster. D82 contacts Mg(2+). Residue C123 participates in [2Fe-2S] cluster binding. Mg(2+)-binding residues include D124 and K125. K125 is modified (N6-carboxylysine). C195 lines the [2Fe-2S] cluster pocket. E447 serves as a coordination point for Mg(2+). Residue S472 is the Proton acceptor of the active site.

Belongs to the IlvD/Edd family. In terms of assembly, homodimer. [2Fe-2S] cluster serves as cofactor. Mg(2+) is required as a cofactor.

It catalyses the reaction (2R)-2,3-dihydroxy-3-methylbutanoate = 3-methyl-2-oxobutanoate + H2O. It carries out the reaction (2R,3R)-2,3-dihydroxy-3-methylpentanoate = (S)-3-methyl-2-oxopentanoate + H2O. It participates in amino-acid biosynthesis; L-isoleucine biosynthesis; L-isoleucine from 2-oxobutanoate: step 3/4. Its pathway is amino-acid biosynthesis; L-valine biosynthesis; L-valine from pyruvate: step 3/4. Functions in the biosynthesis of branched-chain amino acids. Catalyzes the dehydration of (2R,3R)-2,3-dihydroxy-3-methylpentanoate (2,3-dihydroxy-3-methylvalerate) into 2-oxo-3-methylpentanoate (2-oxo-3-methylvalerate) and of (2R)-2,3-dihydroxy-3-methylbutanoate (2,3-dihydroxyisovalerate) into 2-oxo-3-methylbutanoate (2-oxoisovalerate), the penultimate precursor to L-isoleucine and L-valine, respectively. The chain is Dihydroxy-acid dehydratase from Saccharolobus islandicus (strain L.S.2.15 / Lassen #1) (Sulfolobus islandicus).